Reading from the N-terminus, the 134-residue chain is Large ribosomal subunit protein uL16c (134 aa).

The disordered stretch occupies residues 1–22 (MLSPKRTRFRKQHRGRMKGISH).

This sequence belongs to the universal ribosomal protein uL16 family. Part of the 50S ribosomal subunit.

The protein resides in the plastid. Its subcellular location is the chloroplast. The chain is Large ribosomal subunit protein uL16c from Nicotiana tomentosiformis (Tobacco).